Here is a 527-residue protein sequence, read N- to C-terminus: Transcription factor RBF1 (527 aa).

Disordered stretches follow at residues 1–36, 258–281, 328–365, 395–433, and 470–527; these read MSSN…IGAS, ANLY…HNEE, HHLL…QQAA, QLSQ…HGLD, and TQGN…SGFL. The DNA-binding element occupies 160–300; that stretch reads HVRDALTTDE…LRMINPQHNH (141 aa). The segment covering 263–281 has biased composition (basic and acidic residues); it reads NEKDQKRKNKPDEPGHNEE. Low complexity-rich tracts occupy residues 332-365 and 395-428; these read QQEQ…QQAA and QLSQ…PQQT.

Belongs to the RBF1 family.

The protein resides in the nucleus. Its subcellular location is the chromosome. The protein localises to the telomere. Transcriptional activator that binds to the RPG box and to telomeres. Involved in the regulation of the transition between yeast and filamentous forms and plays a role in virulence. Induces expression of HWP1, a major hyphal cell protein and virulence factor. The polypeptide is Transcription factor RBF1 (RBF1) (Candida albicans (Yeast)).